The sequence spans 383 residues: Queuine tRNA-ribosyltransferase (383 aa).

D90 (proton acceptor) is an active-site residue. Residues 90–94, D144, Q193, and G227 each bind substrate; that span reads DSGGF. The RNA binding stretch occupies residues 258–264; the sequence is GVGTPED. D277 acts as the Nucleophile in catalysis. The tract at residues 282–286 is RNA binding; important for wobble base 34 recognition; it reads TRNAR. Zn(2+)-binding residues include C315, C317, C320, and H346.

It belongs to the queuine tRNA-ribosyltransferase family. Homodimer. Within each dimer, one monomer is responsible for RNA recognition and catalysis, while the other monomer binds to the replacement base PreQ1. The cofactor is Zn(2+).

It catalyses the reaction 7-aminomethyl-7-carbaguanine + guanosine(34) in tRNA = 7-aminomethyl-7-carbaguanosine(34) in tRNA + guanine. Its pathway is tRNA modification; tRNA-queuosine biosynthesis. Its function is as follows. Catalyzes the base-exchange of a guanine (G) residue with the queuine precursor 7-aminomethyl-7-deazaguanine (PreQ1) at position 34 (anticodon wobble position) in tRNAs with GU(N) anticodons (tRNA-Asp, -Asn, -His and -Tyr). Catalysis occurs through a double-displacement mechanism. The nucleophile active site attacks the C1' of nucleotide 34 to detach the guanine base from the RNA, forming a covalent enzyme-RNA intermediate. The proton acceptor active site deprotonates the incoming PreQ1, allowing a nucleophilic attack on the C1' of the ribose to form the product. After dissociation, two additional enzymatic reactions on the tRNA convert PreQ1 to queuine (Q), resulting in the hypermodified nucleoside queuosine (7-(((4,5-cis-dihydroxy-2-cyclopenten-1-yl)amino)methyl)-7-deazaguanosine). This chain is Queuine tRNA-ribosyltransferase, found in Ralstonia nicotianae (strain ATCC BAA-1114 / GMI1000) (Ralstonia solanacearum).